The following is a 945-amino-acid chain: Netrin receptor UNC5B (945 aa).

The signal sequence occupies residues 1-26; the sequence is MRARSGVRSALLLALLLCWDPTPSLA. The Extracellular segment spans residues 27–377; that stretch reads GVDSAGQVLP…LETSGDVALY (351 aa). The Ig-like domain occupies 48 to 145; that stretch reads PYFLLEPQDA…SGTTKSRRAY (98 aa). Cystine bridges form between Cys-69/Cys-130, Cys-81/Cys-128, Cys-174/Cys-225, Cys-258/Cys-295, Cys-262/Cys-299, Cys-273/Cys-285, Cys-314/Cys-348, Cys-318/Cys-353, and Cys-326/Cys-338. The region spanning 153-242 is the Ig-like C2-type domain; sequence KNFDQEPLAK…KRRSTTATVI (90 aa). A glycan (N-linked (GlcNAc...) asparagine) is linked at Asn-222. 2 consecutive TSP type-1 domains span residues 246–300 and 302–354; these read NGGW…TVCP and DGAW…GLCV. A glycan (N-linked (GlcNAc...) asparagine) is linked at Asn-347. Residues 378–398 form a helical membrane-spanning segment; sequence AGLVVAVFVVVAVLMAVGVIV. The Cytoplasmic portion of the chain corresponds to 399-945; it reads YRRNCRDFDT…LVAMATDGDC (547 aa). Cys-403 carries the S-palmitoyl cysteine lipid modification. The 144-residue stretch at 543–686 folds into the ZU5 domain; that stretch reads SSVSGTFGCL…LGTYVFMGES (144 aa). Residue Tyr-581 is modified to Phosphotyrosine. The UPA domain stretch occupies residues 689–838; sequence RSAVKRLQLA…AETPAGSLDA (150 aa). Residues 707-725 are interaction with DCC; it reads SLEYSLRVYCLEDTPVALK. The Death domain maps to 865–943; sequence KICSSLDAPN…EMLVAMATDG (79 aa).

It belongs to the unc-5 family. Interacts with the cytoplasmic part of DCC. Interacts with GNAI2 via its cytoplasmic part. Interacts (via death domain) with DAPK1 (via death domain). Interacts (via extracellular domain) with FLRT2 and FLRT3 (via extracellular domain), but has higher affinity for FLRT3. Identified in a complex with FLRT3 and ADGRL3; does not interact with ADGRL3 by itself. Phosphorylated on cytoplasmic tyrosine residues. In terms of processing, palmitoylation is required for pro-apoptotic activity, but not for location at lipid rafts. Post-translationally, proteolytically cleaved by caspases during apoptosis. The cleavage does not take place when the receptor is associated with netrin ligand. Its cleavage by caspases is required to induce apoptosis. Highly expressed in brain. Expressed in lung during late development. Expressed during early blood vessel formation, in the semicircular canal and in a dorsal to ventral gradient in the retina.

The protein resides in the cell membrane. Its subcellular location is the membrane raft. Functionally, receptor for netrin required for axon guidance. Mediates axon repulsion of neuronal growth cones in the developing nervous system upon ligand binding. Axon repulsion in growth cones may be caused by its association with DCC that may trigger signaling for repulsion. Functions as a netrin receptor that negatively regulates vascular branching during angiogenesis. Mediates retraction of tip cell filopodia on endothelial growth cones in response to netrin. It also acts as a dependence receptor required for apoptosis induction when not associated with netrin ligand. Mediates apoptosis by activating DAPK1. In the absence of NTN1, activates DAPK1 by reducing its autoinhibitory phosphorylation at Ser-308 thereby increasing its catalytic activity. The protein is Netrin receptor UNC5B (Unc5b) of Mus musculus (Mouse).